Consider the following 667-residue polypeptide: WD40 repeat-containing protein DDB_G0271002 (667 aa).

WD repeat units follow at residues 165 to 204 (NHGVSTWGIAICPSKPLIAVSSNSHKITIWNLDDENPQET) and 210 to 249 (KHKHNIPSIDFSPCGNYLVSVSIDKNIRIWDVNKRQLLRI). The segment covering 278–293 (SSNSRDNNNNNSNSNN) has biased composition (low complexity). Disordered stretches follow at residues 278 to 301 (SSNSRDNNNNNSNSNNNGGGGIII), 316 to 345 (LVENNQEVEPMPEEEEEEEEEEVNQVDNDD), and 389 to 440 (DIIF…ATTT). Residues 325 to 345 (PMPEEEEEEEEEEVNQVDNDD) are compositionally biased toward acidic residues. Positions 400 to 410 (NQHQQQQQQNQ) are enriched in low complexity. The span at 411–428 (EIEEEGQEGQEEQEDGTE) shows a compositional bias: acidic residues. Residues 429–440 (NENNQGTIATTT) are compositionally biased toward low complexity.

This Dictyostelium discoideum (Social amoeba) protein is WD40 repeat-containing protein DDB_G0271002.